The primary structure comprises 396 residues: Probable porphobilinogen deaminase (396 aa).

Positions 159-224 (APALHREHER…DTASSSEFEQ (66 aa)) are disordered. The interval 159–245 (APALHREHER…LQQSAMERDP (87 aa)) is insert. Basic and acidic residues predominate over residues 162-189 (LHREHERRTEAEKEAQSRDAREQRRGDY). The span at 200-215 (LDTEDGEEGAADDGDD) shows a compositional bias: acidic residues. An S-(dipyrrolylmethanemethyl)cysteine modification is found at Cys-328.

It belongs to the HMBS family. Dipyrromethane serves as cofactor.

The enzyme catalyses 4 porphobilinogen + H2O = hydroxymethylbilane + 4 NH4(+). Its pathway is porphyrin-containing compound metabolism; protoporphyrin-IX biosynthesis; coproporphyrinogen-III from 5-aminolevulinate: step 2/4. Functionally, tetrapolymerization of the monopyrrole PBG into the hydroxymethylbilane pre-uroporphyrinogen in several discrete steps. This chain is Probable porphobilinogen deaminase (hemC), found in Halobacterium salinarum (strain ATCC 700922 / JCM 11081 / NRC-1) (Halobacterium halobium).